A 67-amino-acid chain; its full sequence is Large ribosomal subunit protein bL35 (67 aa).

A compositionally biased stretch (basic residues) spans 1–16; sequence MPKMKTKSGAKKRFRV. The disordered stretch occupies residues 1–25; it reads MPKMKTKSGAKKRFRVRPGGTVKRG.

This sequence belongs to the bacterial ribosomal protein bL35 family.

The polypeptide is Large ribosomal subunit protein bL35 (Polaromonas sp. (strain JS666 / ATCC BAA-500)).